The chain runs to 79 residues: Cytochrome b (79 aa).

Transmembrane regions (helical) follow at residues 1 to 7 (SALFLAM), 31 to 52 (WLIRYMHANGSSLFFICLYLHI), and 67 to 79 (WNIGIILLFLTMA). Residues His-37 and His-51 each contribute to the heme b site.

This sequence belongs to the cytochrome b family. The cytochrome bc1 complex contains 11 subunits: 3 respiratory subunits (MT-CYB, CYC1 and UQCRFS1), 2 core proteins (UQCRC1 and UQCRC2) and 6 low-molecular weight proteins (UQCRH/QCR6, UQCRB/QCR7, UQCRQ/QCR8, UQCR10/QCR9, UQCR11/QCR10 and a cleavage product of UQCRFS1). This cytochrome bc1 complex then forms a dimer. Heme b serves as cofactor.

Its subcellular location is the mitochondrion inner membrane. Its function is as follows. Component of the ubiquinol-cytochrome c reductase complex (complex III or cytochrome b-c1 complex) that is part of the mitochondrial respiratory chain. The b-c1 complex mediates electron transfer from ubiquinol to cytochrome c. Contributes to the generation of a proton gradient across the mitochondrial membrane that is then used for ATP synthesis. The sequence is that of Cytochrome b (MT-CYB) from Dipodomys californicus (California kangaroo rat).